Reading from the N-terminus, the 946-residue chain is RIPOR family member 3 (946 aa).

A phosphoserine mark is found at Ser9, Ser24, and Ser340. Residue Thr345 is modified to Phosphothreonine. Ser351 and Ser384 each carry phosphoserine. Residues 390-512 (GPSLRSQSQE…GDREDGPGVA (123 aa)) form a disordered region. The segment covering 437–446 (SIEEEAREDP) has biased composition (basic and acidic residues). Residues 478–495 (SLPQGSLFHSGTASSSQN) show a composition bias toward polar residues. The span at 496 to 508 (GHEEGATGDREDG) shows a compositional bias: basic and acidic residues.

The protein belongs to the RIPOR family.

In Homo sapiens (Human), this protein is RIPOR family member 3.